The sequence spans 208 residues: MEWWDKSEESLEEEPRKVLAPEPEEIWVAEMLCGLKMKLKRRRVSLVLPEHHEAFNRLLEDPVIKRFLAWDKGLRVSDKYLLAMVIVYFSRAGLPSWQYQCIHFFLALYLANDMEEDDEDPKQNIFYFLYGKTRSRIPLLRKRRFQLCRCMNPRARKNRSQIVLFQKLRFQFFCSMSCRAWVSPEELEEIQAYDPEHWVWARDRARLS.

The protein belongs to the Speedy/Ringo family.

The chain is Putative speedy protein E7 (SPDYE7P) from Homo sapiens (Human).